We begin with the raw amino-acid sequence, 120 residues long: Ribosome-binding factor A (120 aa).

It belongs to the RbfA family. As to quaternary structure, monomer. Binds 30S ribosomal subunits, but not 50S ribosomal subunits or 70S ribosomes.

Its subcellular location is the cytoplasm. Functionally, one of several proteins that assist in the late maturation steps of the functional core of the 30S ribosomal subunit. Associates with free 30S ribosomal subunits (but not with 30S subunits that are part of 70S ribosomes or polysomes). Required for efficient processing of 16S rRNA. May interact with the 5'-terminal helix region of 16S rRNA. This Buchnera aphidicola subsp. Acyrthosiphon pisum (strain 5A) protein is Ribosome-binding factor A.